The sequence spans 177 residues: Dynein light chain Tctex-type 5-A (177 aa).

The protein belongs to the dynein light chain Tctex-type family.

This chain is Dynein light chain Tctex-type 5-A (Dynlt5-a), found in Xenopus laevis (African clawed frog).